Here is a 505-residue protein sequence, read N- to C-terminus: Trans-cinnamate 4-monooxygenase (505 aa).

A helical membrane pass occupies residues 3-23 (LLLIEKTLVALFAAIIGAILI). (E)-cinnamate contacts are provided by residues 213-218 (RSRLAQ) and alanine 306. A heme-binding site is contributed by cysteine 447.

Belongs to the cytochrome P450 family. Requires heme as cofactor.

Its subcellular location is the membrane. It catalyses the reaction (E)-cinnamate + reduced [NADPH--hemoprotein reductase] + O2 = (E)-4-coumarate + oxidized [NADPH--hemoprotein reductase] + H2O + H(+). The protein operates within phenylpropanoid metabolism; trans-4-coumarate biosynthesis; trans-4-coumarate from trans-cinnamate: step 1/1. Inactivated by piperonylic acid. In terms of biological role, catalyzes the first oxidative step of the phenylpropanoid pathway in higher plants by transforming trans-cinnamate into p-coumarate. The compounds formed by this pathway are essential components for lignification, pollination, and defense against ultraviolet light, predators and pathogens. Can also use 2-naphthoic acid as substrate. This chain is Trans-cinnamate 4-monooxygenase, found in Helianthus tuberosus (Jerusalem artichoke).